Consider the following 282-residue polypeptide: Pantothenate synthetase (282 aa).

30 to 37 (MGYLHEGH) lines the ATP pocket. Residue histidine 37 is the Proton donor of the active site. Glutamine 61 serves as a coordination point for (R)-pantoate. Glutamine 61 lines the beta-alanine pocket. An ATP-binding site is contributed by 147 to 150 (GQKD). (R)-pantoate is bound at residue glutamine 153. ATP contacts are provided by residues valine 176 and 184–187 (LSSR).

It belongs to the pantothenate synthetase family. As to quaternary structure, homodimer.

The protein localises to the cytoplasm. The catalysed reaction is (R)-pantoate + beta-alanine + ATP = (R)-pantothenate + AMP + diphosphate + H(+). It participates in cofactor biosynthesis; (R)-pantothenate biosynthesis; (R)-pantothenate from (R)-pantoate and beta-alanine: step 1/1. Functionally, catalyzes the condensation of pantoate with beta-alanine in an ATP-dependent reaction via a pantoyl-adenylate intermediate. This chain is Pantothenate synthetase, found in Desulfitobacterium hafniense (strain DSM 10664 / DCB-2).